The following is a 151-amino-acid chain: RNA polymerase-binding transcription factor DksA (151 aa).

A coiled-coil region spans residues 33–54; that stretch reads NEAQLAHFRRILEAWRNQLRDE. 4 residues coordinate Zn(2+): cysteine 114, cysteine 117, cysteine 135, and cysteine 138. Residues 114-138 form a dksA C4-type zinc finger; the sequence is CESCGVEIGIRRLEARPTADLCIDC.

The protein belongs to the DksA family. Interacts directly with the RNA polymerase.

It localises to the cytoplasm. In terms of biological role, transcription factor that acts by binding directly to the RNA polymerase (RNAP). Required for negative regulation of rRNA expression and positive regulation of several amino acid biosynthesis promoters. Also required for regulation of fis expression. In Escherichia coli O157:H7, this protein is RNA polymerase-binding transcription factor DksA.